We begin with the raw amino-acid sequence, 520 residues long: Peptide chain release factor 3 (520 aa).

Residues 8–277 (ESRKTFAIIS…FAPMPNARQT (270 aa)) form the tr-type G domain. GTP-binding positions include 17–24 (SHPDAGKT), 85–89 (DTPGH), and 139–142 (NKLD).

The protein belongs to the TRAFAC class translation factor GTPase superfamily. Classic translation factor GTPase family. PrfC subfamily.

Its subcellular location is the cytoplasm. In terms of biological role, increases the formation of ribosomal termination complexes and stimulates activities of RF-1 and RF-2. It binds guanine nucleotides and has strong preference for UGA stop codons. It may interact directly with the ribosome. The stimulation of RF-1 and RF-2 is significantly reduced by GTP and GDP, but not by GMP. The polypeptide is Peptide chain release factor 3 (Staphylococcus aureus (strain MRSA252)).